Reading from the N-terminus, the 110-residue chain is Integration host factor subunit alpha (110 aa).

Belongs to the bacterial histone-like protein family. As to quaternary structure, heterodimer of an alpha and a beta chain.

Functionally, this protein is one of the two subunits of integration host factor, a specific DNA-binding protein that functions in genetic recombination as well as in transcriptional and translational control. This is Integration host factor subunit alpha from Nitrobacter hamburgensis (strain DSM 10229 / NCIMB 13809 / X14).